The chain runs to 620 residues: MDSHTLIQALIYLGSAALIVPIAVRLGLGSVLGYLIAGCIIGPWGLRLVTDAESILHFAEIGVVLMLFIIGLELDPQRLWKLRAAVFGGGALQMVICGGLLGLFCMFLGLRWQVAELIGMTLALSSTAIAMQAMNERNLMVTQMGRSAFAVLLFQDIAAIPLVAMIPLLAASSASTTMGAFALSALKVAGALVLVVLLGRYVTRPALRFVARSGLREVFSAVALFLVFGFGLLLEEVGLSMAMGAFLAGVLLASSEYRHALESDIEPFKGLLLGLFFIGVGMSIDFGTLLENPLRIVILLLGFLIIKIAMLWLIARPLQVPNKQRRWFAVLLGQGSEFAFVVFGAAQMANVLEPEWAKSLTLAVALSMAATPILLVILNRLEQSSTEQAREADEIDEEQPRVIIAGFGRYGQITGRLLLSSGVKMVVLDHDPDHIETLRKFGMKVFYGDATRMDLLESAGAAKAEVLINAIDDPQTNLQLTEMVKEHFPHLQIIARARDVDHYIRLRQAGVEKPERETFEGALKTGRLALESLGLGPYEARERADVFRRFNIQMVEEMAVVENDTKARAAVYKRTSAMLSEIITEDREHLSLIQRHGWQGTEEGKHTGNMADEPETKPSS.

Helical transmembrane passes span 4-24 (HTLIQALIYLGSAALIVPIAV), 26-46 (LGLGSVLGYLIAGCIIGPWGL), 54-74 (SILHFAEIGVVLMLFIIGLEL), 90-110 (GALQMVICGGLLGLFCMFLGL), 114-134 (VAELIGMTLALSSTAIAMQAM), 149-169 (FAVLLFQDIAAIPLVAMIPLL), 178-198 (MGAFALSALKVAGALVLVVLL), 218-238 (VFSAVALFLVFGFGLLLEEVG), 270-290 (GLLLGLFFIGVGMSIDFGTLL), 294-314 (LRIVILLLGFLIIKIAMLWLI), 327-347 (WFAVLLGQGSEFAFVVFGAAQ), and 359-379 (SLTLAVALSMAATPILLVILN). Residues 399–518 (QPRVIIAGFG…AGVEKPERET (120 aa)) enclose the RCK N-terminal domain. A disordered region spans residues 597-620 (GWQGTEEGKHTGNMADEPETKPSS).

The protein belongs to the monovalent cation:proton antiporter 2 (CPA2) transporter (TC 2.A.37) family. KefC subfamily. In terms of assembly, homodimer. Interacts with the regulatory subunit KefF.

The protein resides in the cell inner membrane. Functionally, pore-forming subunit of a potassium efflux system that confers protection against electrophiles. Catalyzes K(+)/H(+) antiport. This chain is Glutathione-regulated potassium-efflux system protein KefC, found in Escherichia fergusonii (strain ATCC 35469 / DSM 13698 / CCUG 18766 / IAM 14443 / JCM 21226 / LMG 7866 / NBRC 102419 / NCTC 12128 / CDC 0568-73).